A 339-amino-acid polypeptide reads, in one-letter code: 4-hydroxythreonine-4-phosphate dehydrogenase (339 aa).

Residues His141 and Thr142 each contribute to the substrate site. His171, His215, and His270 together coordinate a divalent metal cation. Substrate is bound by residues Lys278, Asn287, and Arg296.

This sequence belongs to the PdxA family. As to quaternary structure, homodimer. It depends on Zn(2+) as a cofactor. Mg(2+) is required as a cofactor. Requires Co(2+) as cofactor.

Its subcellular location is the cytoplasm. It catalyses the reaction 4-(phosphooxy)-L-threonine + NAD(+) = 3-amino-2-oxopropyl phosphate + CO2 + NADH. It functions in the pathway cofactor biosynthesis; pyridoxine 5'-phosphate biosynthesis; pyridoxine 5'-phosphate from D-erythrose 4-phosphate: step 4/5. In terms of biological role, catalyzes the NAD(P)-dependent oxidation of 4-(phosphooxy)-L-threonine (HTP) into 2-amino-3-oxo-4-(phosphooxy)butyric acid which spontaneously decarboxylates to form 3-amino-2-oxopropyl phosphate (AHAP). The sequence is that of 4-hydroxythreonine-4-phosphate dehydrogenase from Geobacter metallireducens (strain ATCC 53774 / DSM 7210 / GS-15).